The chain runs to 103 residues: MVNIPKARKTHCVKCNKHTPHKVTQYKAGKPSLFAQGKRRYDRKQSGFGGQTKPVFHKKAKTTKKIVLRMECSCGYKKQQVLKRCKRFELGGEKKSKNEAIKM.

The interval 37–56 is disordered; sequence GKRRYDRKQSGFGGQTKPVF.

The protein belongs to the eukaryotic ribosomal protein eL42 family.

This Dictyostelium discoideum (Social amoeba) protein is Large ribosomal subunit protein eL42 (rpl36a).